Consider the following 564-residue polypeptide: Ribulokinase (564 aa).

Belongs to the ribulokinase family.

The catalysed reaction is D-ribulose + ATP = D-ribulose 5-phosphate + ADP + H(+). It carries out the reaction L-ribulose + ATP = L-ribulose 5-phosphate + ADP + H(+). It functions in the pathway carbohydrate degradation; L-arabinose degradation via L-ribulose; D-xylulose 5-phosphate from L-arabinose (bacterial route): step 2/3. This Geobacillus thermodenitrificans (strain NG80-2) protein is Ribulokinase.